A 279-amino-acid polypeptide reads, in one-letter code: Presqualene diphosphate synthase (279 aa).

Belongs to the phytoene/squalene synthase family. HpnD subfamily.

It carries out the reaction 2 (2E,6E)-farnesyl diphosphate = presqualene diphosphate + diphosphate. Its pathway is secondary metabolite biosynthesis; hopanoid biosynthesis. Involved in the biosynthesis of the hopanoid precursor squalene (SQ) from farnesyl diphosphate (FPP). Catalyzes the first step, the formation of presqualene diphosphate (PSPP) from two molecules of FPP. This chain is Presqualene diphosphate synthase, found in Sinorhizobium fredii (strain NBRC 101917 / NGR234).